Reading from the N-terminus, the 240-residue chain is Probable transcriptional regulatory protein MS53_0373 (240 aa).

The protein belongs to the TACO1 family.

The protein resides in the cytoplasm. The chain is Probable transcriptional regulatory protein MS53_0373 from Mycoplasmopsis synoviae (strain 53) (Mycoplasma synoviae).